A 445-amino-acid polypeptide reads, in one-letter code: Methylenetetrahydrofolate--tRNA-(uracil-5-)-methyltransferase TrmFO (445 aa).

10–15 (GGGLSG) is an FAD binding site.

It belongs to the MnmG family. TrmFO subfamily. FAD is required as a cofactor.

The protein resides in the cytoplasm. The catalysed reaction is uridine(54) in tRNA + (6R)-5,10-methylene-5,6,7,8-tetrahydrofolate + NADH + H(+) = 5-methyluridine(54) in tRNA + (6S)-5,6,7,8-tetrahydrofolate + NAD(+). The enzyme catalyses uridine(54) in tRNA + (6R)-5,10-methylene-5,6,7,8-tetrahydrofolate + NADPH + H(+) = 5-methyluridine(54) in tRNA + (6S)-5,6,7,8-tetrahydrofolate + NADP(+). Functionally, catalyzes the folate-dependent formation of 5-methyl-uridine at position 54 (M-5-U54) in all tRNAs. The chain is Methylenetetrahydrofolate--tRNA-(uracil-5-)-methyltransferase TrmFO from Lawsonia intracellularis (strain PHE/MN1-00).